A 501-amino-acid polypeptide reads, in one-letter code: UDP-N-acetylmuramate--L-alanine ligase (501 aa).

130–136 lines the ATP pocket; the sequence is GTHGKTS.

The protein belongs to the MurCDEF family.

The protein localises to the cytoplasm. The catalysed reaction is UDP-N-acetyl-alpha-D-muramate + L-alanine + ATP = UDP-N-acetyl-alpha-D-muramoyl-L-alanine + ADP + phosphate + H(+). It functions in the pathway cell wall biogenesis; peptidoglycan biosynthesis. Functionally, cell wall formation. In Nocardia farcinica (strain IFM 10152), this protein is UDP-N-acetylmuramate--L-alanine ligase.